A 138-amino-acid chain; its full sequence is D-ribose pyranase (138 aa).

Histidine 20 (proton donor) is an active-site residue. Substrate is bound by residues aspartate 28, histidine 105, and 127-129 (YAN).

The protein belongs to the RbsD / FucU family. RbsD subfamily. Homodecamer.

It is found in the cytoplasm. The catalysed reaction is beta-D-ribopyranose = beta-D-ribofuranose. It participates in carbohydrate metabolism; D-ribose degradation; D-ribose 5-phosphate from beta-D-ribopyranose: step 1/2. Catalyzes the interconversion of beta-pyran and beta-furan forms of D-ribose. This Psychromonas ingrahamii (strain DSM 17664 / CCUG 51855 / 37) protein is D-ribose pyranase.